The following is a 503-amino-acid chain: Drimenol monooxygenase (503 aa).

Residues Met-7–Ser-23 traverse the membrane as a helical segment. Ser-471 serves as a coordination point for heme.

This sequence belongs to the cytochrome P450 family. Heme serves as cofactor.

It is found in the membrane. It catalyses the reaction (5S,9S,10S)-drim-7-en-11-ol + reduced [NADPH--hemoprotein reductase] + O2 = (5S,10S)-(9R)-7-drimene-11,12-diol + oxidized [NADPH--hemoprotein reductase] + H2O + H(+). Catalyzes the conversion of drimenol to drimendiol, a precursor of the sesquiterpenoid polygodial. Polygodial has been shown to be an antifeedant for a number of herbivorous insects. The polypeptide is Drimenol monooxygenase (Persicaria hydropiper (Marshpepper knotweed)).